The primary structure comprises 541 residues: Phosphatidylethanolamine transferase Mcr-1 (541 aa).

Topologically, residues 1–14 (MMQHTSVWYRRSVS) are cytoplasmic. A helical membrane pass occupies residues 15-35 (PFVLVASVAVFLTATANLTFF). At 36 to 47 (DKISQTYPIADN) the chain is on the periplasmic side. A helical membrane pass occupies residues 48 to 68 (LGFVLTIAVVLFGAMLLITTL). Residues 69-73 (LSSYR) lie on the Cytoplasmic side of the membrane. The helical transmembrane segment at 74–94 (YVLKPVLILLLIMGAVTSYFT) threads the bilayer. At 95–122 (DTYGTVYDTTMLQNALQTDQAETKDLLN) the chain is on the periplasmic side. Residues 123–143 (AAFIMRIIGLGVLPSLLVAFV) form a helical membrane-spanning segment. The Cytoplasmic segment spans residues 144 to 157 (KVDYPTWGKGLMRR). Residues 158-178 (LGLIVASLALILLPVVAFSSH) form a helical membrane-spanning segment. Topologically, residues 179–541 (YASFFRVHKP…KVKDRTAFIR (363 aa)) are periplasmic. The Zn(2+) site is built by Glu-246 and Thr-285. Disulfide bonds link Cys-281/Cys-291, Cys-356/Cys-364, and Cys-414/Cys-422. Thr-285 carries the post-translational modification Phosphothreonine. The Zn(2+) site is built by Asp-465 and His-466.

This sequence belongs to the phosphoethanolamine transferase family. In terms of assembly, monomer. In terms of processing, phosphorylated at Thr-285; may represent an intermediate in the catalytic mechanism.

The protein resides in the cell inner membrane. The catalysed reaction is lipid A (E. coli) + a 1,2-diacyl-sn-glycero-3-phosphoethanolamine + H(+) = lipid A 4'-(2-aminoethyl diphosphate) (E. coli) + a 1,2-diacyl-sn-glycerol. With respect to regulation, EDTA may inhibit activity. May be inhibited by ethanolamine. Functionally, probably catalyzes the addition of a phosphoethanolamine moiety to lipid A. Phosphoethanolamine modification of lipid A confers polymyxin resistance. Confers resistance to polymyxin-type antibiotics such as colistin; in the E.coli strain W3110. This Escherichia coli protein is Phosphatidylethanolamine transferase Mcr-1 (mcr1).